The primary structure comprises 215 residues: Interleukin-12 subunit alpha (215 aa).

The signal sequence occupies residues 1–22; that stretch reads MCQSRYLLFLATLALLNHLSLA. Disulfide bonds link Cys33–Cys106, Cys60–Cys192, and Cys81–Cys119. A glycan (N-linked (GlcNAc...) asparagine) is linked at Asn89.

It belongs to the IL-6 superfamily. Heterodimer with IL12B; disulfide-linked. This heterodimer is known as interleukin IL-12. Heterodimer with EBI3/IL27B; not disulfide-linked. This heterodimer is known as interleukin IL-35. Interacts with NBR1; this interaction promotes IL-12 secretion.

It localises to the secreted. Functionally, heterodimerizes with IL12B to form the IL-12 cytokine or with EBI3/IL27B to form the IL-35 cytokine. IL-12 is primarily produced by professional antigen-presenting cells (APCs) such as B-cells and dendritic cells (DCs) as well as macrophages and granulocytes and regulates T-cell and natural killer-cell responses, induces the production of interferon-gamma (IFN-gamma), favors the differentiation of T-helper 1 (Th1) cells and is an important link between innate resistance and adaptive immunity. Mechanistically, exerts its biological effects through a receptor composed of IL12R1 and IL12R2 subunits. Binding to the receptor results in the rapid tyrosine phosphorylation of a number of cellular substrates including the JAK family kinases TYK2 and JAK2. In turn, recruited STAT4 gets phosphorylated and translocates to the nucleus where it regulates cytokine/growth factor responsive genes. As part of IL-35, plays essential roles in maintaining the immune homeostasis of the liver microenvironment and also functions as an immune-suppressive cytokine. Mediates biological events through unconventional receptors composed of IL12RB2 and gp130/IL6ST heterodimers or homodimers. Signaling requires the transcription factors STAT1 and STAT4, which form a unique heterodimer that binds to distinct DNA sites. This Mus musculus (Mouse) protein is Interleukin-12 subunit alpha (Il12a).